Consider the following 139-residue polypeptide: MELSVAMCGLLCLLFSQAVPMCVPTDYTLYEERRECDFCVAINTTICMGFCYSRDSNMKELAGPRFLIQRGCTYDQVEYRTVILPGCPLHANPLFTYPVALSCHCGTCNTDSDECAHKASSGDGARCSKPLRHIYHTLA.

Residues 1 to 20 form the signal peptide; the sequence is MELSVAMCGLLCLLFSQAVP. Disulfide bonds link Cys-22/Cys-72, Cys-36/Cys-87, Cys-39/Cys-127, Cys-47/Cys-103, Cys-51/Cys-105, and Cys-108/Cys-115. N-linked (GlcNAc...) asparagine glycosylation occurs at Asn-43.

It belongs to the glycoprotein hormones subunit beta family. As to quaternary structure, heterodimer of a common alpha chain and a unique beta chain which confers biological specificity to thyrotropin, lutropin, follitropin and gonadotropin.

Its subcellular location is the secreted. Functionally, indispensable for the control of thyroid structure and metabolism. May play some role in the biological processes of the immature fishes. The chain is Thyrotropin subunit beta (tshb) from Salmo salar (Atlantic salmon).